A 257-amino-acid chain; its full sequence is Ribonuclease HII (257 aa).

The RNase H type-2 domain occupies 72 to 257 (ERVAGIDEVG…FSPVQKILQA (186 aa)). A divalent metal cation contacts are provided by aspartate 78, glutamate 79, and aspartate 170.

This sequence belongs to the RNase HII family. Requires Mn(2+) as cofactor. The cofactor is Mg(2+).

The protein resides in the cytoplasm. The enzyme catalyses Endonucleolytic cleavage to 5'-phosphomonoester.. Functionally, endonuclease that specifically degrades the RNA of RNA-DNA hybrids. This is Ribonuclease HII from Levilactobacillus brevis (strain ATCC 367 / BCRC 12310 / CIP 105137 / JCM 1170 / LMG 11437 / NCIMB 947 / NCTC 947) (Lactobacillus brevis).